Consider the following 351-residue polypeptide: Histidinol-phosphate aminotransferase (351 aa).

The segment at 1–26 (MRFRAELEPLSPYNPPRASQEAAAER) is disordered. Residue Lys223 is modified to N6-(pyridoxal phosphate)lysine.

Belongs to the class-II pyridoxal-phosphate-dependent aminotransferase family. Histidinol-phosphate aminotransferase subfamily. Homodimer. Pyridoxal 5'-phosphate is required as a cofactor.

The enzyme catalyses L-histidinol phosphate + 2-oxoglutarate = 3-(imidazol-4-yl)-2-oxopropyl phosphate + L-glutamate. It participates in amino-acid biosynthesis; L-histidine biosynthesis; L-histidine from 5-phospho-alpha-D-ribose 1-diphosphate: step 7/9. This is Histidinol-phosphate aminotransferase from Rubrobacter xylanophilus (strain DSM 9941 / JCM 11954 / NBRC 16129 / PRD-1).